The chain runs to 405 residues: Adenosylhomocysteinase (405 aa).

Substrate-binding residues include aspartate 113 and glutamate 138. 139–141 contributes to the NAD(+) binding site; sequence TTT. Substrate contacts are provided by lysine 168 and aspartate 172. Residues asparagine 173, 202-207, glutamate 225, asparagine 260, 281-283, and asparagine 327 contribute to the NAD(+) site; these read GYGWCG and AGH.

Belongs to the adenosylhomocysteinase family. The cofactor is NAD(+).

The protein resides in the cytoplasm. It catalyses the reaction S-adenosyl-L-homocysteine + H2O = L-homocysteine + adenosine. Its pathway is amino-acid biosynthesis; L-homocysteine biosynthesis; L-homocysteine from S-adenosyl-L-homocysteine: step 1/1. May play a key role in the regulation of the intracellular concentration of adenosylhomocysteine. This chain is Adenosylhomocysteinase, found in Archaeoglobus fulgidus (strain ATCC 49558 / DSM 4304 / JCM 9628 / NBRC 100126 / VC-16).